The following is a 118-amino-acid chain: Large ribosomal subunit protein bL20 (118 aa).

This sequence belongs to the bacterial ribosomal protein bL20 family.

In terms of biological role, binds directly to 23S ribosomal RNA and is necessary for the in vitro assembly process of the 50S ribosomal subunit. It is not involved in the protein synthesizing functions of that subunit. The polypeptide is Large ribosomal subunit protein bL20 (Hahella chejuensis (strain KCTC 2396)).